A 138-amino-acid chain; its full sequence is Putative nickel-responsive regulator (138 aa).

Histidine 76, histidine 87, histidine 89, and cysteine 95 together coordinate Ni(2+).

Belongs to the transcriptional regulatory CopG/NikR family. Requires Ni(2+) as cofactor.

Its function is as follows. Transcriptional regulator. The protein is Putative nickel-responsive regulator of Pseudomonas putida (strain W619).